Reading from the N-terminus, the 349-residue chain is uncharacterized protein (349 aa).

An N-terminal signal peptide occupies residues 1–16; sequence MLFKISFLALIASALA. The Lumenal segment spans residues 17–326; sequence MSINSPTNGD…SSSSSSSAAS (310 aa). 2 disordered regions span residues 115 to 190 and 243 to 322; these read ASSS…SSYR and TNGT…SSSS. Low complexity-rich tracts occupy residues 116 to 176, 243 to 278, and 289 to 322; these read SSSS…SSRT, TNGT…TASG, and STND…SSSS. The helical transmembrane segment at 327 to 347 threads the bilayer; the sequence is LVSQPVGISAVIAFFAVALSL. Topologically, residues 348–349 are cytoplasmic; that stretch reads TL.

It localises to the endoplasmic reticulum membrane. This is an uncharacterized protein from Schizosaccharomyces pombe (strain 972 / ATCC 24843) (Fission yeast).